A 162-amino-acid polypeptide reads, in one-letter code: Phospholipase A and acyltransferase 3 (162 aa).

Residues 1 to 133 (MRAPIPEPKP…VARSDQVRDV (133 aa)) are Cytoplasmic-facing. Positions 13 to 129 (LIEIFRPFYR…LRYGVARSDQ (117 aa)) constitute an LRAT domain. Catalysis depends on residues histidine 23 and histidine 35. Cysteine 113 (acyl-thioester intermediate) is an active-site residue. Residues 134-154 (IIAASAAGMGLAAMSLIGVMF) form a helical membrane-spanning segment. Residues 155–162 (SRNKRQKQ) are Lumenal-facing.

This sequence belongs to the H-rev107 family. As to quaternary structure, interacts with PPP2R1A; this interaction might decrease PP2A activity.

It is found in the cell membrane. It localises to the cytoplasm. Its subcellular location is the cytosol. The protein resides in the perinuclear region. The protein localises to the peroxisome membrane. It is found in the mitochondrion membrane. It localises to the nucleus envelope. Its subcellular location is the lysosome membrane. The protein resides in the endoplasmic reticulum membrane. It carries out the reaction a 1,2-diacyl-sn-glycero-3-phosphocholine + H2O = a 1-acyl-sn-glycero-3-phosphocholine + a fatty acid + H(+). It catalyses the reaction a 1,2-diacyl-sn-glycero-3-phosphocholine + H2O = a 2-acyl-sn-glycero-3-phosphocholine + a fatty acid + H(+). The enzyme catalyses 1,2-dihexadecanoyl-sn-glycero-3-phosphocholine + H2O = 1-hexadecanoyl-sn-glycero-3-phosphocholine + hexadecanoate + H(+). The catalysed reaction is 1,2-dihexadecanoyl-sn-glycero-3-phosphocholine + H2O = 2-hexadecanoyl-sn-glycero-3-phosphocholine + hexadecanoate + H(+). It carries out the reaction 1-hexadecanoyl-2-(9Z-octadecenoyl)-sn-glycero-3-phosphocholine + H2O = 2-(9Z-octadecenoyl)-sn-glycero-3-phosphocholine + hexadecanoate + H(+). It catalyses the reaction 1-hexadecanoyl-2-(9Z-octadecenoyl)-sn-glycero-3-phosphocholine + H2O = 1-hexadecanoyl-sn-glycero-3-phosphocholine + (9Z)-octadecenoate + H(+). The enzyme catalyses 1-hexadecanoyl-2-(5Z,8Z,11Z,14Z-eicosatetraenoyl)-sn-glycero-3-phosphocholine + H2O = 1-hexadecanoyl-sn-glycero-3-phosphocholine + (5Z,8Z,11Z,14Z)-eicosatetraenoate + H(+). The catalysed reaction is 1-hexadecanoyl-2-(5Z,8Z,11Z,14Z-eicosatetraenoyl)-sn-glycero-3-phosphocholine + H2O = 2-(5Z,8Z,11Z,14Z)-eicosatetraenoyl-sn-glycero-3-phosphocholine + hexadecanoate + H(+). It carries out the reaction 1-hexadecanoyl-2-(9Z,12Z-octadecadienoyl)-sn-glycero-3-phosphoethanolamine + H2O = 1-hexadecanoyl-sn-glycero-3-phosphoethanolamine + (9Z,12Z)-octadecadienoate + H(+). It catalyses the reaction 1-hexadecanoyl-2-(9Z,12Z-octadecadienoyl)-sn-glycero-3-phosphoethanolamine + H2O = 2-(9Z,12Z)-octadecadienoyl-sn-glycero-3-phosphoethanolamine + hexadecanoate + H(+). The enzyme catalyses 1-hexadecanoyl-2-(5Z,8Z,11Z,14Z-eicosatetraenoyl)-sn-glycero-3-phosphoethanolamine + H2O = 1-hexadecanoyl-sn-glycero-3-phosphoethanolamine + (5Z,8Z,11Z,14Z)-eicosatetraenoate + H(+). The catalysed reaction is 1-hexadecanoyl-2-(5Z,8Z,11Z,14Z-eicosatetraenoyl)-sn-glycero-3-phosphoethanolamine + H2O = 2-(5Z,8Z,11Z,14Z)-eicosatetraenoyl-sn-glycero-3-phosphoethanolamine + hexadecanoate + H(+). It carries out the reaction 1-hexanoyl-2-acyl-sn-glycero-3-phosphocholine + H2O = hexanoate + a 2-acyl-sn-glycero-3-phosphocholine + H(+). It catalyses the reaction 1-hexanoyl-2-acyl-sn-glycero-3-phosphocholine + H2O = 1-hexanoyl-sn-glycero-3-phosphocholine + a fatty acid + H(+). The enzyme catalyses 1,2-diheptadecanoyl-sn-glycero-3-phosphoethanolamine + 1-(9Z-octadecenoyl)-2-hexadecanoyl-sn-glycero-3-phosphocholine = 1,2-diheptadecanoyl-sn-glycero-3-phospho-N-hexadecanoyl-ethanolamine + 1-(9Z-octadecenoyl)-sn-glycero-3-phosphocholine + H(+). The catalysed reaction is 1,2-diheptadecanoyl-sn-glycero-3-phosphoethanolamine + 1-(9Z-octadecenoyl)-2-hexadecanoyl-sn-glycero-3-phosphocholine = 1,2-diheptadecanoyl-sn-glycero-3-phospho-N-(9Z-octadecenoyl)-ethanolamine + 2-hexadecanoyl-sn-glycero-3-phosphocholine + H(+). It carries out the reaction 1,2-dihexanoyl-sn-glycero-3-phosphoethanolamine + 2-heptanoyl-sn-glycero-3-phosphocholine = hexanoyl-sn-glycero-3-phosphoethanolamine + 1-hexanoyl-2-heptanoyl-sn-glycero-3-phosphocholine. It catalyses the reaction 1-hexadecanoyl-2-octadecanoyl-sn-glycero-3-phosphocholine + H2O = octadecanoate + 1-hexadecanoyl-sn-glycero-3-phosphocholine + H(+). The enzyme catalyses 1-hexadecanoyl-2-octadecanoyl-sn-glycero-3-phosphocholine + H2O = 2-octadecanoyl-sn-glycero-3-phosphocholine + hexadecanoate + H(+). The catalysed reaction is 1-octadecanoyl-2-hexadecanoyl-sn-glycero-3-phosphocholine + H2O = 1-octadecanoyl-sn-glycero-3-phosphocholine + hexadecanoate + H(+). It carries out the reaction 1-octadecanoyl-2-hexadecanoyl-sn-glycero-3-phosphocholine + H2O = 2-hexadecanoyl-sn-glycero-3-phosphocholine + octadecanoate + H(+). It catalyses the reaction 1-hexadecanoyl-2-(9Z,12Z-octadecadienoyl)-sn-glycero-3-phosphocholine + H2O = (9Z,12Z)-octadecadienoate + 1-hexadecanoyl-sn-glycero-3-phosphocholine + H(+). The enzyme catalyses 1-hexadecanoyl-2-(9Z,12Z-octadecadienoyl)-sn-glycero-3-phosphocholine + H2O = 2-(9Z,12Z-octadecadienoyl)-sn-glycero-3-phosphocholine + hexadecanoate + H(+). The catalysed reaction is 1,2-di-(9Z-octadecenoyl)-sn-glycero-3-phosphocholine + H2O = 2-(9Z-octadecenoyl)-sn-glycero-3-phosphocholine + (9Z)-octadecenoate + H(+). It carries out the reaction 1,2-dihexadecanoyl-sn-glycero-3-phosphocholine + H2O = hexadecanoyl-sn-glycero-3-phosphocholine + hexadecanoate + H(+). It catalyses the reaction 1,2-di-(9Z-octadecenoyl)-sn-glycero-3-phosphocholine + H2O = 1-(9Z-octadecenoyl)-sn-glycero-3-phosphocholine + (9Z)-octadecenoate + H(+). The enzyme catalyses 1,2-di-(9Z-octadecenoyl)-sn-glycero-3-phosphoethanolamine + 1,2-dihexadecanoyl-sn-glycero-3-phosphocholine = hexadecanoyl-sn-glycero-3-phosphocholine + N-hexadecanoyl-1,2-di-(9Z-octadecenoyl)-sn-glycero-3-phosphoethanolamine + H(+). The catalysed reaction is 1,2-di-(9Z,12Z-octadecadienoyl)-sn-glycero-3-phosphocholine + H2O = 1-(9Z,12Z)-octadecadienoyl-sn-glycero-3-phosphocholine + (9Z,12Z)-octadecadienoate + H(+). Functionally, exhibits both phospholipase A1/2 and acyltransferase activities. Shows phospholipase A1 (PLA1) and A2 (PLA2), catalyzing the calcium-independent release of fatty acids from the sn-1 or sn-2 position of glycerophospholipids. For most substrates, PLA1 activity is much higher than PLA2 activity. Shows O-acyltransferase activity, catalyzing the transfer of a fatty acyl group from glycerophospholipid to the hydroxyl group of lysophospholipid. Shows N-acyltransferase activity, catalyzing the calcium-independent transfer of a fatty acyl group at the sn-1 position of phosphatidylcholine (PC) and other glycerophospholipids to the primary amine of phosphatidylethanolamine (PE), forming N-acylphosphatidylethanolamine (NAPE), which serves as precursor for N-acylethanolamines (NAEs). Exhibits high N-acyltransferase activity and low phospholipase A1/2 activity. Required for complete organelle rupture and degradation that occur during eye lens terminal differentiation, when fiber cells that compose the lens degrade all membrane-bound organelles in order to provide lens with transparency to allow the passage of light. Organelle membrane degradation is probably catalyzed by the phospholipase activity. Plays a role in phospholipid metabolism and adipogenesis. The sequence is that of Phospholipase A and acyltransferase 3 from Pongo abelii (Sumatran orangutan).